Consider the following 500-residue polypeptide: NAD(P)H-quinone oxidoreductase chain 4, chloroplastic (500 aa).

The next 14 helical transmembrane spans lie at 3 to 23 (FFPW…VIFF), 37 to 57 (ICIC…HFQF), 84 to 104 (GLSI…TLAA), 111 to 129 (SRLF…IGSF), 134 to 154 (LLLF…LLSI), 167 to 187 (FILY…GVGL), 208 to 228 (ALEI…SPII), 242 to 262 (HYST…YGLI), 272 to 292 (AHSI…IYAA), 305 to 325 (IAYS…SITD), 330 to 350 (GAIL…FLAG), 386 to 406 (LALP…GIIT), 416 to 436 (ILIT…SLSM), and 462 to 482 (LFVS…PDFV).

The protein belongs to the complex I subunit 4 family.

It is found in the plastid. Its subcellular location is the chloroplast thylakoid membrane. It carries out the reaction a plastoquinone + NADH + (n+1) H(+)(in) = a plastoquinol + NAD(+) + n H(+)(out). The catalysed reaction is a plastoquinone + NADPH + (n+1) H(+)(in) = a plastoquinol + NADP(+) + n H(+)(out). This chain is NAD(P)H-quinone oxidoreductase chain 4, chloroplastic, found in Panax ginseng (Korean ginseng).